Consider the following 797-residue polypeptide: Inulosucrase (797 aa).

A signal peptide spans 1–36; that stretch reads MLENKNHKKISLSGKSLLMGTLSTAAIVLSASTANA. The span at 54-64 shows a compositional bias: polar residues; the sequence is ASSVNNENNKQ. The segment at 54-176 is disordered; that stretch reads ASSVNNENNK…SVKPAENATK (123 aa). 2 stretches are compositionally biased toward basic and acidic residues: residues 65-75 and 82-95; these read VTEKDSADKST and ANTK…ETTE. Low complexity predominate over residues 130–139; that stretch reads DQKTTNAATT. The segment covering 140 to 167 has biased composition (basic and acidic residues); the sequence is DTKKDDVKQVEKKDSVDKTNAEENKDSS. Trp271 lines the substrate pocket. The active-site Nucleophile is Asp272. Residue Asn317 coordinates Ca(2+). Ser340 is a binding site for substrate. Residue Asp419 participates in Ca(2+) binding. Position 424 to 425 (424 to 425) interacts with substrate; it reads RD. Gln450, Trp487, Asn489, and Asp521 together coordinate Ca(2+). Residues 522–524 and Arg542 contribute to the substrate site; that span reads EIE. Glu524 (proton donor/acceptor) is an active-site residue. The Ca(2+) site is built by Asp660, Ile662, and Ser667. The segment at 708-766 is disordered; that stretch reads QPVTPIPNVPTTPETPTTPDKPEVPTTPEVPTTPETPTPEAPKNPVKKTSQSKLPKAGD. The span at 718–740 shows a compositional bias: low complexity; the sequence is TTPETPTTPDKPEVPTTPEVPTT. The LPXTG sorting signal signature appears at 761–765; that stretch reads LPKAG. Ala764 is subject to Pentaglycyl murein peptidoglycan amidated alanine. A propeptide spans 765-797 (removed by sortase); that stretch reads GDKNSFAAVVLGAVSSILGAVGLTGVSKRKRNN.

It belongs to the glycosyl hydrolase 68 family. The cofactor is Ca(2+).

The protein localises to the secreted. It localises to the cell wall. The enzyme catalyses [(2-&gt;1)-beta-D-fructosyl](n) + sucrose = [(2-&gt;1)-beta-D-fructosyl](n+1) + D-glucose. In terms of biological role, fructosyltransferase that catalyzes the polymerization of the fructose moiety of sucrose to produce inulin polymer and inulin oligosaccharides such as 1-kestose and nystose. In Lactobacillus johnsonii (strain CNCM I-12250 / La1 / NCC 533), this protein is Inulosucrase.